Reading from the N-terminus, the 163-residue chain is 3-isopropylmalate dehydratase small subunit (163 aa).

It belongs to the LeuD family. LeuD type 2 subfamily. In terms of assembly, heterodimer of LeuC and LeuD.

It catalyses the reaction (2R,3S)-3-isopropylmalate = (2S)-2-isopropylmalate. It functions in the pathway amino-acid biosynthesis; L-leucine biosynthesis; L-leucine from 3-methyl-2-oxobutanoate: step 2/4. Functionally, catalyzes the isomerization between 2-isopropylmalate and 3-isopropylmalate, via the formation of 2-isopropylmaleate. This chain is 3-isopropylmalate dehydratase small subunit, found in Endomicrobium trichonymphae.